The chain runs to 496 residues: RNA-binding motif protein, Y chromosome, family 1 member B (496 aa).

The RRM domain occupies 8-85 (GKLFIGGLNR…KAIKVEQAKK (78 aa)). 2 disordered regions span residues 67-349 (DMNG…HRDY) and 452-496 (KDQR…SSRY). 2 stretches are compositionally biased toward low complexity: residues 97 to 114 (PASS…SARG) and 149 to 159 (PVKRGPSSRSG). Over residues 175 to 184 (NSWMGSQGPM) the composition is skewed to polar residues. Composition is skewed to basic and acidic residues over residues 204 to 214 (RNDRMSTRHDG), 242 to 253 (DNGHSNRDEHSS), 276 to 289 (AYRD…DESY), 313 to 326 (GYRD…HESY), 335 to 349 (SSRE…HRDY), and 484 to 496 (GESR…SSRY).

In terms of assembly, interacts with splicing factor proteins SFRS3/SRP20, TRA2B/SFRS10, KHDRBS1/SAM68 and KHDRBS3. Testis-specific.

It localises to the nucleus. Functionally, RNA-binding protein which may be involved in spermatogenesis. Required for sperm development, possibly by participating in pre-mRNA splicing in the testis. This Homo sapiens (Human) protein is RNA-binding motif protein, Y chromosome, family 1 member B (RBMY1B).